The following is a 340-amino-acid chain: Entry-fusion complex protein OPG094 (340 aa).

Residues Met-1–Thr-20 are disordered. Gly-2 carries the N-myristoyl glycine; by host lipid modification. The Virion surface portion of the chain corresponds to Gly-2–Asp-319. A helical; Signal-anchor for type II membrane protein transmembrane segment spans residues Leu-320–Ile-340.

The protein belongs to the orthopoxvirus OPG086 family. In terms of assembly, interacts with OPG143. Component of the entry fusion complex (EFC) composed of OPG053, OPG076, OPG086, OPG094, OPG095, OPG099, OPG107, OPG143, OPG104, OPG147 and OPG155. Except for OPG095 and OPG053, each of the EFC proteins is required for assembly or stability of the complex. Post-translationally, unglycosylated because produced in viral factories instead of the classic ER -Golgi route.

It is found in the virion membrane. In terms of biological role, component of the entry fusion complex (EFC), which consists of 11 proteins. During cell infection, this complex mediates entry of the virion core into the host cytoplasm by a two-step mechanism consisting of lipid mixing of the viral and cellular membranes and subsequent pore formation. The chain is Entry-fusion complex protein OPG094 (OPG094) from Homo sapiens (Human).